We begin with the raw amino-acid sequence, 221 residues long: Membrane-bound lytic murein transglycosylase E (221 aa).

It belongs to the transglycosylase Slt family.

It carries out the reaction Exolytic cleavage of the (1-&gt;4)-beta-glycosidic linkage between N-acetylmuramic acid (MurNAc) and N-acetylglucosamine (GlcNAc) residues in peptidoglycan, from either the reducing or the non-reducing ends of the peptidoglycan chains, with concomitant formation of a 1,6-anhydrobond in the MurNAc residue.. Murein-degrading enzyme. May play a role in recycling of muropeptides during cell elongation and/or cell division. This is Membrane-bound lytic murein transglycosylase E (mltE) from Buchnera aphidicola subsp. Acyrthosiphon pisum (strain APS) (Acyrthosiphon pisum symbiotic bacterium).